Here is a 148-residue protein sequence, read N- to C-terminus: Large ribosomal subunit protein uL22c (148 aa).

Belongs to the universal ribosomal protein uL22 family. As to quaternary structure, part of the 50S ribosomal subunit.

Its subcellular location is the plastid. It localises to the chloroplast. Functionally, this protein binds specifically to 23S rRNA. In terms of biological role, the globular domain of the protein is located near the polypeptide exit tunnel on the outside of the subunit, while an extended beta-hairpin is found that lines the wall of the exit tunnel in the center of the 70S ribosome. This Zea mays (Maize) protein is Large ribosomal subunit protein uL22c (rpl22).